Here is a 343-residue protein sequence, read N- to C-terminus: MAEYDHYEDDGFLNSFNDSSQEEHQDFLQFRKVFLPCMYLVVFVCGLVGNSLVLVISIFYHKLQSLTDVFLVNLPLADLVFVCTLPFWTYAGIHEWIFGQVMCKTLLGVYTINFYTSMLILTCITVDRFIVVVKATKAYNQQAKRMTWGKVICLLIWVISLLVSLPQIIYGNVFNLDKLICGYHDEEISTVVLATQMTLGFFLPLLAMIVCYSVIIKTLLHAGGFQKHRSLKIIFLVMAVFLLTQTPFNLVKLIRSTRWEYYAMTSFHYTIIVTEAIAYLRACLNPVLYAFVSLKFRKNFWKLVKDIGCLPYLGVSHQWKSSEDNSKTFSASHNVEATSMFQL.

Residues 1–33 lie on the Extracellular side of the membrane; sequence MAEYDHYEDDGFLNSFNDSSQEEHQDFLQFRKV. The N-linked (GlcNAc...) asparagine glycan is linked to N17. Residues 34-60 traverse the membrane as a helical segment; the sequence is FLPCMYLVVFVCGLVGNSLVLVISIFY. Topologically, residues 61–69 are cytoplasmic; it reads HKLQSLTDV. Residues 70–90 traverse the membrane as a helical segment; that stretch reads FLVNLPLADLVFVCTLPFWTY. Residues 91–104 are Extracellular-facing; sequence AGIHEWIFGQVMCK. C103 and C181 are oxidised to a cystine. A helical transmembrane segment spans residues 105–126; the sequence is TLLGVYTINFYTSMLILTCITV. Residues 127–144 lie on the Cytoplasmic side of the membrane; the sequence is DRFIVVVKATKAYNQQAK. The chain crosses the membrane as a helical span at residues 145 to 165; that stretch reads RMTWGKVICLLIWVISLLVSL. The Extracellular portion of the chain corresponds to 166–188; the sequence is PQIIYGNVFNLDKLICGYHDEEI. The helical transmembrane segment at 189 to 216 threads the bilayer; that stretch reads STVVLATQMTLGFFLPLLAMIVCYSVII. Residues 217 to 232 are Cytoplasmic-facing; it reads KTLLHAGGFQKHRSLK. The helical transmembrane segment at 233-260 threads the bilayer; sequence IIFLVMAVFLLTQTPFNLVKLIRSTRWE. Residues 261-276 are Extracellular-facing; the sequence is YYAMTSFHYTIIVTEA. The helical transmembrane segment at 277–294 threads the bilayer; the sequence is IAYLRACLNPVLYAFVSL. Topologically, residues 295–343 are cytoplasmic; that stretch reads KFRKNFWKLVKDIGCLPYLGVSHQWKSSEDNSKTFSASHNVEATSMFQL.

The protein belongs to the G-protein coupled receptor 1 family.

It localises to the cell membrane. Its function is as follows. Receptor for the C-X-C chemokine CXCL16. Used as a coreceptor by SIVs and by strains of HIV-2 and m-tropic HIV-1. The chain is C-X-C chemokine receptor type 6 (CXCR6) from Macaca fascicularis (Crab-eating macaque).